The primary structure comprises 229 residues: MKQVRLPSSATVRAACAVAVAALAGCAQIPRDPIIQQPMTAQPPMPMSMQAPGSIYNPGFAGRPLFEDQRPRNIGDILTIMIAENINATKSSGANTNRQGNTDFNVPTAGFLGGLFAKANLSATGANKFAATGGASAANTFNGTITVTVTNVLPNGNLVVSGEKQMLINQGNEFVRFSGVVNPNTISGANSVYSTQVADAKIEYSSKGYINEAETMGWLQRFFLNIAPW.

An N-terminal signal peptide occupies residues 1 to 25 (MKQVRLPSSATVRAACAVAVAALAG). A lipid anchor (N-palmitoyl cysteine) is attached at C26. C26 is lipidated: S-diacylglycerol cysteine.

This sequence belongs to the FlgH family. The basal body constitutes a major portion of the flagellar organelle and consists of four rings (L,P,S, and M) mounted on a central rod.

Its subcellular location is the cell outer membrane. It localises to the bacterial flagellum basal body. Assembles around the rod to form the L-ring and probably protects the motor/basal body from shearing forces during rotation. The sequence is that of Flagellar L-ring protein from Burkholderia cenocepacia (strain ATCC BAA-245 / DSM 16553 / LMG 16656 / NCTC 13227 / J2315 / CF5610) (Burkholderia cepacia (strain J2315)).